Consider the following 1166-residue polypeptide: Tectonin beta-propeller repeat-containing protein 1 (1166 aa).

4 TECPR repeats span residues Leu209–Glu240, Asp254–Glu285, Ser301–Val332, and Asp344–Val376. Ser386, Ser388, Ser391, Ser413, and Ser418 each carry phosphoserine. The disordered stretch occupies residues Arg404–Asp496. Positions Gly407–Asp416 are enriched in polar residues. The span at Thr451–Ala462 shows a compositional bias: polar residues. Positions Glu466–Arg481 are enriched in basic and acidic residues. The region spanning Lys616–Cys722 is the PH domain. Residues Gln734–Leu761 form a TECPR 5 repeat. Ser943 bears the Phosphoserine mark. TECPR repeat units follow at residues Val958–Gly989, Tyr1003–Pro1034, Thr1049–Ser1080, and Asp1092–Ile1132.

The protein belongs to the TECPR1 family. As to quaternary structure, interacts with ATG5; the interaction is direct. Interacts with WIPI2. Interacts with the ATG5-ATG12 conjugate, the interaction is however mutually exclusive with ATG16, since it does not interact with ATG12-ATG5-ATG16 complex.

It is found in the cytoplasmic vesicle. The protein resides in the autophagosome membrane. Its subcellular location is the lysosome membrane. Functionally, tethering factor involved in autophagy. Involved in autophagosome maturation by promoting the autophagosome fusion with lysosomes: acts by associating with both the ATG5-ATG12 conjugate and phosphatidylinositol-3-phosphate (PtdIns(3)P) present at the surface of autophagosomes. Also involved in selective autophagy against bacterial pathogens, by being required for phagophore/preautophagosomal structure biogenesis and maturation. This is Tectonin beta-propeller repeat-containing protein 1 (Tecpr1) from Mus musculus (Mouse).